Consider the following 291-residue polypeptide: Ribosomal RNA small subunit methyltransferase A (291 aa).

Positions 29, 31, 56, 77, 102, and 127 each coordinate S-adenosyl-L-methionine.

This sequence belongs to the class I-like SAM-binding methyltransferase superfamily. rRNA adenine N(6)-methyltransferase family. RsmA subfamily.

The protein resides in the cytoplasm. It catalyses the reaction adenosine(1518)/adenosine(1519) in 16S rRNA + 4 S-adenosyl-L-methionine = N(6)-dimethyladenosine(1518)/N(6)-dimethyladenosine(1519) in 16S rRNA + 4 S-adenosyl-L-homocysteine + 4 H(+). Its function is as follows. Specifically dimethylates two adjacent adenosines (A1518 and A1519) in the loop of a conserved hairpin near the 3'-end of 16S rRNA in the 30S particle. May play a critical role in biogenesis of 30S subunits. The polypeptide is Ribosomal RNA small subunit methyltransferase A (Geobacillus sp. (strain WCH70)).